The chain runs to 904 residues: Phosphoenolpyruvate carboxylase (904 aa).

Active-site residues include His-151 and Lys-570.

This sequence belongs to the PEPCase type 1 family. Requires Mg(2+) as cofactor.

The enzyme catalyses oxaloacetate + phosphate = phosphoenolpyruvate + hydrogencarbonate. Its function is as follows. Forms oxaloacetate, a four-carbon dicarboxylic acid source for the tricarboxylic acid cycle. The sequence is that of Phosphoenolpyruvate carboxylase from Xanthomonas campestris pv. campestris (strain ATCC 33913 / DSM 3586 / NCPPB 528 / LMG 568 / P 25).